Here is a 296-residue protein sequence, read N- to C-terminus: Small ribosomal subunit biogenesis GTPase RsgA (296 aa).

In terms of domain architecture, CP-type G spans 65 to 226 (TNELIRPPIS…VADTPGFSSL (162 aa)). GTP is bound by residues 114–117 (TKMD) and 169–177 (GQSGVGKSS). Positions 250, 255, 257, and 263 each coordinate Zn(2+).

It belongs to the TRAFAC class YlqF/YawG GTPase family. RsgA subfamily. As to quaternary structure, monomer. Associates with 30S ribosomal subunit, binds 16S rRNA. The cofactor is Zn(2+).

The protein resides in the cytoplasm. Functionally, one of several proteins that assist in the late maturation steps of the functional core of the 30S ribosomal subunit. Helps release RbfA from mature subunits. May play a role in the assembly of ribosomal proteins into the subunit. Circularly permuted GTPase that catalyzes slow GTP hydrolysis, GTPase activity is stimulated by the 30S ribosomal subunit. This Bacillus velezensis (strain DSM 23117 / BGSC 10A6 / LMG 26770 / FZB42) (Bacillus amyloliquefaciens subsp. plantarum) protein is Small ribosomal subunit biogenesis GTPase RsgA.